The sequence spans 564 residues: Dihydroxy-acid dehydratase (564 aa).

The span at 1–10 shows a compositional bias: basic residues; the sequence is MTDTRTKRRM. The tract at residues 1–23 is disordered; that stretch reads MTDTRTKRRMNWNSHHITQGDER. Cys57 is a [2Fe-2S] cluster binding site. Asp89 provides a ligand contact to Mg(2+). Cys130 contributes to the [2Fe-2S] cluster binding site. Asp131 and Lys132 together coordinate Mg(2+). Residue Lys132 is modified to N6-carboxylysine. Cys202 is a binding site for [2Fe-2S] cluster. Glu454 provides a ligand contact to Mg(2+). Ser480 (proton acceptor) is an active-site residue.

Belongs to the IlvD/Edd family. As to quaternary structure, homodimer. It depends on [2Fe-2S] cluster as a cofactor. Mg(2+) is required as a cofactor.

The catalysed reaction is (2R)-2,3-dihydroxy-3-methylbutanoate = 3-methyl-2-oxobutanoate + H2O. It carries out the reaction (2R,3R)-2,3-dihydroxy-3-methylpentanoate = (S)-3-methyl-2-oxopentanoate + H2O. It functions in the pathway amino-acid biosynthesis; L-isoleucine biosynthesis; L-isoleucine from 2-oxobutanoate: step 3/4. It participates in amino-acid biosynthesis; L-valine biosynthesis; L-valine from pyruvate: step 3/4. In terms of biological role, functions in the biosynthesis of branched-chain amino acids. Catalyzes the dehydration of (2R,3R)-2,3-dihydroxy-3-methylpentanoate (2,3-dihydroxy-3-methylvalerate) into 2-oxo-3-methylpentanoate (2-oxo-3-methylvalerate) and of (2R)-2,3-dihydroxy-3-methylbutanoate (2,3-dihydroxyisovalerate) into 2-oxo-3-methylbutanoate (2-oxoisovalerate), the penultimate precursor to L-isoleucine and L-valine, respectively. This is Dihydroxy-acid dehydratase from Deinococcus geothermalis (strain DSM 11300 / CIP 105573 / AG-3a).